Consider the following 203-residue polypeptide: 3-isopropylmalate dehydratase small subunit (203 aa).

It belongs to the LeuD family. LeuD type 1 subfamily. Heterodimer of LeuC and LeuD.

The catalysed reaction is (2R,3S)-3-isopropylmalate = (2S)-2-isopropylmalate. Its pathway is amino-acid biosynthesis; L-leucine biosynthesis; L-leucine from 3-methyl-2-oxobutanoate: step 2/4. In terms of biological role, catalyzes the isomerization between 2-isopropylmalate and 3-isopropylmalate, via the formation of 2-isopropylmaleate. The sequence is that of 3-isopropylmalate dehydratase small subunit from Phenylobacterium zucineum (strain HLK1).